The primary structure comprises 268 residues: Tryptophan synthase alpha chain (268 aa).

Active-site proton acceptor residues include glutamate 47 and aspartate 58.

Belongs to the TrpA family. As to quaternary structure, tetramer of two alpha and two beta chains.

It carries out the reaction (1S,2R)-1-C-(indol-3-yl)glycerol 3-phosphate + L-serine = D-glyceraldehyde 3-phosphate + L-tryptophan + H2O. Its pathway is amino-acid biosynthesis; L-tryptophan biosynthesis; L-tryptophan from chorismate: step 5/5. Functionally, the alpha subunit is responsible for the aldol cleavage of indoleglycerol phosphate to indole and glyceraldehyde 3-phosphate. This is Tryptophan synthase alpha chain from Chlorobium phaeobacteroides (strain BS1).